The sequence spans 460 residues: ATP synthase subunit beta 1 (460 aa).

Gly149 to Thr156 contributes to the ATP binding site.

The protein belongs to the ATPase alpha/beta chains family. As to quaternary structure, F-type ATPases have 2 components, CF(1) - the catalytic core - and CF(0) - the membrane proton channel. CF(1) has five subunits: alpha(3), beta(3), gamma(1), delta(1), epsilon(1). CF(0) has three main subunits: a(1), b(2) and c(9-12). The alpha and beta chains form an alternating ring which encloses part of the gamma chain. CF(1) is attached to CF(0) by a central stalk formed by the gamma and epsilon chains, while a peripheral stalk is formed by the delta and b chains.

It localises to the cell inner membrane. The enzyme catalyses ATP + H2O + 4 H(+)(in) = ADP + phosphate + 5 H(+)(out). Functionally, produces ATP from ADP in the presence of a proton gradient across the membrane. The catalytic sites are hosted primarily by the beta subunits. This is ATP synthase subunit beta 1 from Nitrosomonas eutropha (strain DSM 101675 / C91 / Nm57).